Consider the following 531-residue polypeptide: Laccase-4 (531 aa).

The N-terminal stretch at 1–19 (MLSSITLLPLLAAVSTPAF) is a signal peptide. Plastocyanin-like domains are found at residues 23–146 (RNYK…LVIY), 158–315 (VDDA…LHYE), and 384–507 (SLPT…VSSR). N-linked (GlcNAc...) asparagine glycosylation is present at Asn66. His83 and His85 together coordinate Cu cation. Cys104 and Cys528 are oxidised to a cystine. Residue Asn109 is glycosylated (N-linked (GlcNAc...) asparagine). Cu cation is bound by residues His128 and His130. Residues Asn186, Asn231, Asn280, and Asn395 are each glycosylated (N-linked (GlcNAc...) asparagine). His427, His430, His432, His479, Cys480, and His481 together coordinate Cu cation.

The protein belongs to the multicopper oxidase family. In terms of assembly, homodimer. Cu cation serves as cofactor. As to expression, in mycelia, at a higher level than LCC1, LCC2 and LCC3.

It is found in the secreted. It carries out the reaction 4 hydroquinone + O2 = 4 benzosemiquinone + 2 H2O. In terms of biological role, lignin degradation and detoxification of lignin-derived products. The chain is Laccase-4 (LCC4) from Thanatephorus cucumeris (Black scurf of potato).